Here is a 372-residue protein sequence, read N- to C-terminus: Pepsin A (372 aa).

Positions 1–42 (MSVVKIPLVKKKSLRQNLIENGKLKEFMRTHKYNLGSKYIRE) are cleaved as a propeptide — activation peptide. The Peptidase A1 domain occupies 60–369 (YFGTIGIGTP…DRGNNQIGLA (310 aa)). Residue Asp-78 is part of the active site. Cys-91 and Cys-96 are joined by a disulfide. A Phosphoserine modification is found at Ser-114. Cysteines 252 and 256 form a disulfide. Residue Asp-261 is part of the active site. The cysteines at positions 295 and 328 are disulfide-linked.

It belongs to the peptidase A1 family.

It is found in the secreted. It carries out the reaction Preferential cleavage: hydrophobic, preferably aromatic, residues in P1 and P1' positions. Cleaves 1-Phe-|-Val-2, 4-Gln-|-His-5, 13-Glu-|-Ala-14, 14-Ala-|-Leu-15, 15-Leu-|-Tyr-16, 16-Tyr-|-Leu-17, 23-Gly-|-Phe-24, 24-Phe-|-Phe-25 and 25-Phe-|-Tyr-26 bonds in the B chain of insulin.. Its function is as follows. Shows particularly broad specificity; although bonds involving phenylalanine and leucine are preferred, many others are also cleaved to some extent. This is Pepsin A (PGA) from Bos taurus (Bovine).